We begin with the raw amino-acid sequence, 190 residues long: Secretory phospholipase A2 (190 aa).

An N-terminal signal peptide occupies residues 1 to 15 (MKLAYFSSLLPLALA). Cys62 and Cys78 form a disulfide bridge. Ala65 is a binding site for Ca(2+). His81 is a catalytic residue. A Ca(2+)-binding site is contributed by Asp82.

It belongs to the phospholipase A2 family. It depends on Ca(2+) as a cofactor.

It localises to the lipid droplet. The protein resides in the secreted. It carries out the reaction a 1,2-diacyl-sn-glycero-3-phosphocholine + H2O = a 1-acyl-sn-glycero-3-phosphocholine + a fatty acid + H(+). Its function is as follows. Secretory phospholipase that catalyzes the calcium-dependent hydrolysis of the 2-acyl groups in 3-sn-phosphoglycerides. Increases the ability to utilize insect-derived nutrients and lipids, and promotes lipid dropplets accumulation. Plays a role in virulence, including more efficient penetration of the insect cuticle and evasion of host immune response by repressing the expression of host immunity genes. The sequence is that of Secretory phospholipase A2 from Beauveria bassiana (strain ARSEF 2860) (White muscardine disease fungus).